A 416-amino-acid polypeptide reads, in one-letter code: Deferrochelatase (416 aa).

The segment at residues 1 to 28 is a signal peptide (tat-type signal); that stretch reads MSDEQKKPEQIHRRDILKWGAMAGAAVA. 241-243 is a binding site for heme b; it reads GTG. Positions 293-318 are disordered; sequence QEDTFGRRKSSGAPFGQKKETDPVKL. Positions 326 and 339 each coordinate heme b.

This sequence belongs to the DyP-type peroxidase family. Component of the iron transporter efeUOB/M complex composed of EfeU, EfeM and EfeB; EfeU is essential for the complex formation. It depends on heme b as a cofactor. Exported by the Tat system. The position of the signal peptide cleavage has not been experimentally proven.

It localises to the secreted. It is found in the cell membrane. The catalysed reaction is heme b + 2 H(+) = protoporphyrin IX + Fe(2+). It catalyses the reaction 2 Fe(2+) + H2O2 + 2 H(+) = 2 Fe(3+) + 2 H2O. Its function is as follows. Involved in the recovery of exogenous heme iron. Extracts iron from heme while preserving the protoporphyrin ring intact. Part of the iron transporter system efeUOB/M involved in iron import. Catalyzes the peroxide-mediated oxidation of Fe(2+) into Fe(3+); EfeM binds Fe(3+) and delivers it to the cell membrane permease EfeU. This Bacillus subtilis (strain 168) protein is Deferrochelatase.